Here is an 84-residue protein sequence, read N- to C-terminus: uncharacterized protein (84 aa).

This is an uncharacterized protein from Schizosaccharomyces pombe (strain 972 / ATCC 24843) (Fission yeast).